Consider the following 265-residue polypeptide: MRATIDDPQAALPRILCLHGGGSNSRIFKAQTRALRYELSNYFRFVFVEGPFDSEPGPDVTSAYEKFGPFRRWFRSGPQHPPIDSHTAVACIEESIYAAMERDDLQGGTGDYVAVMGFSQGAKLAASLLFRQQIRAEKLGQAMSGTNFRFAILLNGRGPLVSMDPELVMNTALMDASQIALDRPVTLEDLCRKEHVLRLPTIHVHGLQDPGLMLHRVLLREYCSKNARLVEWDGAHRVPIKTKDVLPLVHEILQLAKQTGVVFAA.

Residues Ser119, Asp209, and His236 each act as charge relay system in the active site.

It belongs to the LovG family.

Its pathway is secondary metabolite biosynthesis. Functionally, probable esterase; part of the gene cluster that mediates the biosynthesis of azaterrilone A and other azaphilones, a class of fungal metabolites characterized by a highly oxygenated pyrano-quinone bicyclic core and exhibiting a broad range of bioactivities. The first step of the pathway begins with the non-reducing polyketide synthase tazA that assembles one acetyl-CoA starter unit, five malonyl-CoA units, and catalyzes a series of Claisen condensations, methylation, PT-mediated cyclization, and finally releases the first hexaketide precursor through the R-domain. The tazA product then undergoes reduction on its terminal ketone and the following pyran-ring formation by yet undetermined enzyme(s). Dehydration and enoyl reduction, possibly involving the trans-enoyl reductase tazE leads to the next intermediate. TazD is predicted as an acetyltransferase and might catalyze the acetylation steps leading to the synthesis of azaterrilone A. Azaterrilone A is not the final product of the taz pathway and both the highly reducing polyketide synthase tazB and the dual enzyme tazHJ catalyze late steps of the pathway, leading to the production of the 2 final stereoisomers that contain additional polyketide modification whose structures have still to be determined. This chain is Probable esterase tazC, found in Aspergillus terreus (strain NIH 2624 / FGSC A1156).